The following is a 219-amino-acid chain: Small ribosomal subunit protein uS3c (219 aa).

Residues 39–111 form the KH type-2 domain; it reads IRKFLMEKIK…NSFFNVKINF (73 aa).

The protein belongs to the universal ribosomal protein uS3 family. As to quaternary structure, part of the 30S ribosomal subunit.

The protein resides in the plastid. This Euglena longa (Euglenophycean alga) protein is Small ribosomal subunit protein uS3c (rps3).